Consider the following 65-residue polypeptide: Beta-toxin Tf4a (65 aa).

Residues 2-63 (KEGYPADSKG…VWDSATNKCG (62 aa)) enclose the LCN-type CS-alpha/beta domain. Cystine bridges form between Cys-12/Cys-62, Cys-16/Cys-38, Cys-24/Cys-43, and Cys-28/Cys-45. Cys-62 is modified (cysteine amide).

Belongs to the long (4 C-C) scorpion toxin superfamily. Sodium channel inhibitor family. Alpha subfamily. As to expression, expressed by the venom gland.

Its subcellular location is the secreted. Alpha toxins bind voltage-independently at site-3 of sodium channels (Nav) and inhibit the inactivation of the activated channels, thereby blocking neuronal transmission. This toxin is toxic to frogs but non-toxic to insect larvae (T.molitor), mammals (rats) and crustaceans (crabs) at the doses assayed. The chain is Beta-toxin Tf4a from Tityus fasciolatus (Central Brazilian scorpion).